Here is a 255-residue protein sequence, read N- to C-terminus: 5'-nucleotidase SurE (255 aa).

A divalent metal cation is bound by residues D11, D12, S43, and N99.

It belongs to the SurE nucleotidase family. A divalent metal cation is required as a cofactor.

Its subcellular location is the cytoplasm. It carries out the reaction a ribonucleoside 5'-phosphate + H2O = a ribonucleoside + phosphate. Nucleotidase that shows phosphatase activity on nucleoside 5'-monophosphates. The chain is 5'-nucleotidase SurE from Caldanaerobacter subterraneus subsp. tengcongensis (strain DSM 15242 / JCM 11007 / NBRC 100824 / MB4) (Thermoanaerobacter tengcongensis).